Consider the following 348-residue polypeptide: Dihydroorotase (348 aa).

Positions 14 and 16 each coordinate Zn(2+). Substrate is bound by residues 16 to 18 and N42; that span reads HLR. Residues K100, H137, and H175 each contribute to the Zn(2+) site. The residue at position 100 (K100) is an N6-carboxylysine. H137 is a substrate binding site. Substrate is bound at residue L220. Residue D248 participates in Zn(2+) binding. Residue D248 is part of the active site. Substrate-binding residues include H252 and A264.

Belongs to the metallo-dependent hydrolases superfamily. DHOase family. Class II DHOase subfamily. As to quaternary structure, homodimer. The cofactor is Zn(2+).

The catalysed reaction is (S)-dihydroorotate + H2O = N-carbamoyl-L-aspartate + H(+). It participates in pyrimidine metabolism; UMP biosynthesis via de novo pathway; (S)-dihydroorotate from bicarbonate: step 3/3. In terms of biological role, catalyzes the reversible cyclization of carbamoyl aspartate to dihydroorotate. In Pseudomonas aeruginosa (strain UCBPP-PA14), this protein is Dihydroorotase.